The primary structure comprises 61 residues: Transmembrane protein 300R (61 aa).

Transmembrane regions (helical) follow at residues 5 to 25 and 35 to 55; these read FLDL…FYLT and SLSY…IYLQ.

It is found in the membrane. This Invertebrate iridescent virus 6 (IIV-6) protein is Transmembrane protein 300R.